We begin with the raw amino-acid sequence, 716 residues long: Fatty acid oxidation complex subunit alpha (716 aa).

An enoyl-CoA hydratase/isomerase region spans residues 1–189 (MIYQSPTIQV…KVGAVDAVVA (189 aa)). Aspartate 296 lines the substrate pocket. The interval 311–716 (KDVKSAAVLG…AANNGSYYQA (406 aa)) is 3-hydroxyacyl-CoA dehydrogenase. NAD(+)-binding positions include methionine 324, aspartate 343, 400–402 (VVE), lysine 407, and serine 429. Histidine 450 functions as the For 3-hydroxyacyl-CoA dehydrogenase activity in the catalytic mechanism. NAD(+) is bound at residue asparagine 453. Residues asparagine 500 and tyrosine 660 each coordinate substrate.

It in the N-terminal section; belongs to the enoyl-CoA hydratase/isomerase family. This sequence in the C-terminal section; belongs to the 3-hydroxyacyl-CoA dehydrogenase family. As to quaternary structure, heterotetramer of two alpha chains (FadB) and two beta chains (FadA).

It carries out the reaction a (3S)-3-hydroxyacyl-CoA + NAD(+) = a 3-oxoacyl-CoA + NADH + H(+). It catalyses the reaction a (3S)-3-hydroxyacyl-CoA = a (2E)-enoyl-CoA + H2O. The enzyme catalyses a 4-saturated-(3S)-3-hydroxyacyl-CoA = a (3E)-enoyl-CoA + H2O. The catalysed reaction is (3S)-3-hydroxybutanoyl-CoA = (3R)-3-hydroxybutanoyl-CoA. It carries out the reaction a (3Z)-enoyl-CoA = a 4-saturated (2E)-enoyl-CoA. It catalyses the reaction a (3E)-enoyl-CoA = a 4-saturated (2E)-enoyl-CoA. Its pathway is lipid metabolism; fatty acid beta-oxidation. Its function is as follows. Involved in the aerobic and anaerobic degradation of long-chain fatty acids via beta-oxidation cycle. Catalyzes the formation of 3-oxoacyl-CoA from enoyl-CoA via L-3-hydroxyacyl-CoA. It can also use D-3-hydroxyacyl-CoA and cis-3-enoyl-CoA as substrate. This Shewanella sp. (strain MR-7) protein is Fatty acid oxidation complex subunit alpha.